We begin with the raw amino-acid sequence, 1190 residues long: Isoleucine--tRNA ligase, cytoplasmic (1190 aa).

The 'HIGH' region signature appears at 49–59 (PFATGLPHYGH). Residues 271 to 299 (DKPKAKLSNGPAGDTKKANPKAKGAKPES) are disordered. Positions 632–636 (KMAKK) match the 'KMSKS' region motif. Residue Lys635 participates in ATP binding.

This sequence belongs to the class-I aminoacyl-tRNA synthetase family.

It is found in the cytoplasm. Its subcellular location is the cytosol. It catalyses the reaction tRNA(Ile) + L-isoleucine + ATP = L-isoleucyl-tRNA(Ile) + AMP + diphosphate. The chain is Isoleucine--tRNA ligase, cytoplasmic from Arabidopsis thaliana (Mouse-ear cress).